Consider the following 879-residue polypeptide: Putative ankyrin repeat protein L88 (879 aa).

ANK repeat units follow at residues 22 to 62, 63 to 96, 100 to 133, 137 to 170, 174 to 207, 211 to 241, 245 to 278, 282 to 313, 317 to 347, 351 to 384, 387 to 420, 424 to 463, 470 to 499, 506 to 542, 546 to 578, 674 to 704, and 708 to 738; these read KGFT…QKNK, KGYT…KTNI, EGIT…DINA, NGYT…NIDD, NGLT…DINA, NGRT…DIEA, KGLT…NIEA, KLRT…NIET, RNNT…NINH, EGCN…NINN, SERT…DPNI, NGNT…NPNF, NSLT…DINS, SALL…DVNI, NGNT…NPNT, SGIT…DPNI, and KGET…NPYI.

This is Putative ankyrin repeat protein L88 from Acanthamoeba polyphaga mimivirus (APMV).